A 319-amino-acid chain; its full sequence is MQVTFLGTSSGVPTRARNVSAVALRLPQRSEMWLFDCGEGTQHQFLRSDLRLSQLRRVFVTHMHGDHVFGLPGLLASLGLSGSCQDGVDLYGPDPLESFLKGALNTSSTRIGYPLQVHRSRPAAEQGTLLFEDDELTVRCTPLTHRVPAYAYRVDQKPLAGRFDIDKARSLGIPPGPVYAQLKRGESVTLEDGRVIDGTTLCGPERPGVSVMICTDTVFCDAAVELARGVDLLIHESTFAHAEAEMAFQKQHSTSTMAAQTAAEAGVGQLAITHLSPRYVPGNPVSPDDLLKEAQAIFPNTVLAKDFLSLDVKPCCNSS.

Zn(2+) is bound by residues His-62, His-64, Asp-66, His-67, His-145, Asp-216, and His-274. Asp-66 serves as the catalytic Proton acceptor.

The protein belongs to the RNase Z family. In terms of assembly, homodimer. Zn(2+) serves as cofactor.

The catalysed reaction is Endonucleolytic cleavage of RNA, removing extra 3' nucleotides from tRNA precursor, generating 3' termini of tRNAs. A 3'-hydroxy group is left at the tRNA terminus and a 5'-phosphoryl group is left at the trailer molecule.. In terms of biological role, zinc phosphodiesterase, which displays some tRNA 3'-processing endonuclease activity. Probably involved in tRNA maturation, by removing a 3'-trailer from precursor tRNA. This is Ribonuclease Z from Parasynechococcus marenigrum (strain WH8102).